The primary structure comprises 485 residues: MFS-type transporter phm3 (485 aa).

The segment at 1–22 (MSLQDPTKEHNNTSPSPKDEKT) is disordered. The next 12 helical transmembrane spans lie at 55 to 75 (FTLY…LLVA), 83 to 103 (IVAS…PFLL), 113 to 133 (LWLY…CALS), 144 to 164 (FICG…IADL), 175 to 195 (ALFG…GGFV), 203 to 223 (WTFY…AVIM), 278 to 298 (PIVL…YLLF), 317 to 337 (GLAF…FAIL), 357 to 377 (LVLM…YGWS), 384 to 404 (WIVP…ILMP), 421 to 441 (ALAV…LAGP), and 449 to 469 (LGWG…VPFV).

It belongs to the major facilitator superfamily.

It localises to the cell membrane. Functionally, MFS-type transporter; part of the gene cluster that mediates the biosynthesis of the trans-fused decalin-containing tetramic acid phomasetin. The protein is MFS-type transporter phm3 of Pyrenochaetopsis sp.